The chain runs to 444 residues: Trigger factor (444 aa).

Positions Gly-166–Ala-251 constitute a PPIase FKBP-type domain.

The protein belongs to the FKBP-type PPIase family. Tig subfamily.

The protein localises to the cytoplasm. The enzyme catalyses [protein]-peptidylproline (omega=180) = [protein]-peptidylproline (omega=0). Its function is as follows. Involved in protein export. Acts as a chaperone by maintaining the newly synthesized protein in an open conformation. Functions as a peptidyl-prolyl cis-trans isomerase. In Cereibacter sphaeroides (strain ATCC 17025 / ATH 2.4.3) (Rhodobacter sphaeroides), this protein is Trigger factor.